The primary structure comprises 288 residues: MTAPTVPVALVTGAAKRLGRSIAEGLHAEGYAVCLHYHRSAAEANALSATLNARRPNSAITVQADLSNVATAPVSGADGSAPVTLFTRCAELVAACYTHWGRCDVLVNNASSFYPTPLLRNDEDGHEPCVGDREAMETATADLFGSNAIAPYFLIKAFAHRFAGTPAKHRGTNYSIINMVDAMTNQPLLGYTIYTMAKGALEGLTRSAALELAPLQIRVNGVGPGLSVLVDDMPPAVWEGHRSKVPLYQRDSSAAEVSDVVIFLCSSKAKYITGTCVKVDGGYSLTRA.

17–40 serves as a coordination point for NADP(+); it reads RLGRSIAEGLHAEGYAVCLHYHRS. Residue S175 coordinates substrate. Y194 acts as the Proton acceptor in catalysis.

The protein belongs to the short-chain dehydrogenases/reductases (SDR) family. As to quaternary structure, homotetramer.

It catalyses the reaction (6R)-L-erythro-5,6,7,8-tetrahydrobiopterin + 2 NADP(+) = L-erythro-biopterin + 2 NADPH + 2 H(+). Its pathway is cofactor biosynthesis; tetrahydrobiopterin biosynthesis; tetrahydrobiopterin from biopterin: step 1/1. Functionally, exhibits a NADPH-dependent biopterin reductase activity. Has good activity with folate and significant activity with dihydrofolate and dihydrobiopterin, but not with quinonoid dihydrobiopterin. Confers resistance to methotrexate (MTX). The chain is Pteridine reductase 1 (PTR1) from Leishmania major.